Here is a 436-residue protein sequence, read N- to C-terminus: ATP-dependent RNA helicase RhlB (436 aa).

A Q motif motif is present at residues 9–37 (QKFADFPLHKEVHQALNEAGFEFCTPIQA). A Helicase ATP-binding domain is found at 40–219 (LPILLEKKDI…YDHMNEPEKV (180 aa)). 53–60 (AQTGTGKT) contacts ATP. A DEAD box motif is present at residues 165-168 (DEAD). The 148-residue stretch at 243-390 (KMPLLLSLLE…VTSYDSDALL (148 aa)) folds into the Helicase C-terminal domain. The tract at residues 392–436 (DIPPPVRIHRKPSTHTRNTRDRGASRPQGGQRSGPRRHDRTRRHS) is disordered. Over residues 425 to 436 (GPRRHDRTRRHS) the composition is skewed to basic residues.

It belongs to the DEAD box helicase family. RhlB subfamily. Component of the RNA degradosome, which is a multiprotein complex involved in RNA processing and mRNA degradation.

Its subcellular location is the cytoplasm. It catalyses the reaction ATP + H2O = ADP + phosphate + H(+). Its function is as follows. DEAD-box RNA helicase involved in RNA degradation. Has RNA-dependent ATPase activity and unwinds double-stranded RNA. This is ATP-dependent RNA helicase RhlB from Shewanella halifaxensis (strain HAW-EB4).